The following is a 155-amino-acid chain: Catabolic 3-dehydroquinase (155 aa).

Residue tyrosine 24 is the Proton acceptor of the active site. Residues asparagine 75, histidine 81, and aspartate 88 each contribute to the substrate site. Histidine 101 acts as the Proton donor in catalysis. Residues valine 102–serine 103 and arginine 112 each bind substrate.

It belongs to the type-II 3-dehydroquinase family. As to quaternary structure, homododecamer. Adopts a ring-like structure, composed of an arrangement of two hexameric rings stacked on top of one another.

It catalyses the reaction 3-dehydroquinate = 3-dehydroshikimate + H2O. Its pathway is aromatic compound metabolism; 3,4-dihydroxybenzoate biosynthesis; 3,4-dihydroxybenzoate from 3-dehydroquinate: step 1/2. In terms of biological role, is involved in the catabolism of quinate. Allows the utilization of quinate as carbon source via the beta-ketoadipate pathway. This is Catabolic 3-dehydroquinase from Penicillium rubens (strain ATCC 28089 / DSM 1075 / NRRL 1951 / Wisconsin 54-1255) (Penicillium chrysogenum).